The chain runs to 501 residues: MSSSGMPDLPAPLTNIKIQHTKLFINNEWHDSVSGKTFPVFNPATEEKICEVEEADKEDVDKAVKAAREAFQMGSPWRTMDASERGQLIYKLADLIERDRLLLATLESINAGKIFASAYLMDLDYCIKVLRYCAGWADKIQGRTIPVDGEFFSYTRHEPIGVCGQIFPWNAPMILLACKIGPALCCGNTVIVKPAEQTPLTALHVASLIKEAGFPPGVVNIVPGYGPTAGAAISSHMDVDKVAFTGSTEVGKMIQEAAAKSNLKRVTLELGAKNPCIVFADADLDSAVEFAHQGVFTNQGQSCIAASKLFVEETIYDEFVQRSVERAKKYVFGNPLTPGVNHGPQINKAQHNKIMELIESGKKEGAKLECGGGPWGNKGYFIQPTIFSNVTDDMRIAKEEIFGPVQQIMKFKSLDEVIKRANNTYYGLVAGVFTKDLDKAVTVSSALQAGTVWVNCYLAASAQSPAGGFKMSGHGREMGEYGIHEYTEVKTVTMKISEKNS.

246–251 (GSTEVG) contacts NAD(+). The active-site Proton acceptor is the Glu269. Residue Cys303 is the Nucleophile of the active site.

It belongs to the aldehyde dehydrogenase family. Homotetramer. Eye specific, with very high expression in the lens.

The protein localises to the cytoplasm. The catalysed reaction is an aldehyde + NAD(+) + H2O = a carboxylate + NADH + 2 H(+). The protein operates within alcohol metabolism; ethanol degradation; acetate from ethanol: step 2/2. Major component of the eye of elephant shrews, which in contrast to other mammals, possesses both a lens- and a non-lens class-1 aldehyde dehydrogenase 1. This eye-specific form is a structural protein of the lens and, in other part of the eye, serves as the major form of ALDH1. Can convert/oxidize retinaldehyde to retinoic acid. This is Aldehyde dehydrogenase, cytosolic 1 (ALDH1) from Macroscelides proboscideus (Short-eared elephant shrew).